The following is an 870-amino-acid chain: Radial spoke head 10 homolog B2 (870 aa).

Over residues 1–16 (MVKEKKKADKKGEKSA) the composition is skewed to basic and acidic residues. The interval 1–44 (MVKEKKKADKKGEKSARSPSSLSDNLDFSKQDGNTTRQEMSPAG) is disordered. Residues 17 to 39 (RSPSSLSDNLDFSKQDGNTTRQE) show a composition bias toward polar residues. MORN repeat units follow at residues 86 to 108 (YEGEKVRGLYEGEGFAAFQGGCT), 109 to 131 (YRGMFSEGLMHGQGTYIWADGLK), 132 to 154 (YEGDFVKNVPMNHGVYTWPDGSM), 155 to 177 (YEGEVVNGMRNGFGMFKCSTQPV), 179 to 201 (YIGHWCNGKRHGKGSIYYNQEGT), 204 to 226 (YEGDWVQNIKKGWGIRCYKSGNI), 227 to 249 (YEGQWEDNMRHGEGRMRWLTTNE), 251 to 273 (YTGRWERGIQNGFGTHTWFLKRI), 284 to 306 (YIGEFVNGYRHGRGKFYYASGAM), and 307 to 329 (YDGEWVSNKKHGMGRLTFKNGRV). The interval 674–704 (NKSPSAVMSHESDAAHSDSARSSSSKLELSP) is disordered. Residues 683 to 692 (HESDAAHSDS) show a composition bias toward basic and acidic residues. Over residues 693-703 (ARSSSSKLELS) the composition is skewed to low complexity. Residues 784 to 811 (KEKIRADRLRSTAQAQQRKMEDDELEAR) adopt a coiled-coil conformation. The interval 840-870 (VSSSHLILDPPKEDVTVSPSSKTITSKKKKK) is disordered.

As to quaternary structure, interacts with RSPH6A. Does not appear to be part of the axonemal radial spoke complexes 1 or 2.

The protein localises to the cytoplasm. Its subcellular location is the cytoskeleton. It is found in the cilium axoneme. The protein resides in the cell projection. It localises to the cilium. The protein localises to the flagellum. Functionally, may function as part of the axonemal radial spoke complex 3 (RS3). Radial spoke complexes are important for ciliary motility. The protein is Radial spoke head 10 homolog B2 (RSPH10B2) of Homo sapiens (Human).